The following is a 159-amino-acid chain: Dihydrofolate reductase (159 aa).

In terms of domain architecture, DHFR spans 2-157 (TLSILVAHDL…IPHTFLHLIR (156 aa)). Substrate is bound at residue 6 to 8 (LVA). NADP(+) contacts are provided by residues 7–8 (VA) and 15–20 (IGFENQ). D28 is a binding site for substrate. Position 44 to 47 (44 to 47 (GRKT)) interacts with NADP(+). A substrate-binding site is contributed by R58. Residues 63-66 (LTSD) and 93-98 (FGGQIL) each bind NADP(+). Position 112 (T112) interacts with substrate.

Belongs to the dihydrofolate reductase family.

The catalysed reaction is (6S)-5,6,7,8-tetrahydrofolate + NADP(+) = 7,8-dihydrofolate + NADPH + H(+). Its pathway is cofactor biosynthesis; tetrahydrofolate biosynthesis; 5,6,7,8-tetrahydrofolate from 7,8-dihydrofolate: step 1/1. Its function is as follows. Key enzyme in folate metabolism. Catalyzes an essential reaction for de novo glycine and purine synthesis, and for DNA precursor synthesis. The polypeptide is Dihydrofolate reductase (folA) (Staphylococcus aureus (strain MW2)).